The sequence spans 349 residues: Hydrophobic dipeptide epimerase (349 aa).

Substrate contacts are provided by residues Thr127 and 153–155 (KIK). Mg(2+) is bound by residues Asp186, Glu212, and Asp237. Residues Lys259 and 309–311 (DLD) contribute to the substrate site.

The protein belongs to the mandelate racemase/muconate lactonizing enzyme family. Mg(2+) serves as cofactor.

Catalyzes the epimerization a variety of hydrophobic dipeptides. Epimerase activity is highest with L-Ala-L-Tyr, and lower with L-Ala-L-Met, L-Ala-L-Phe, L-Tyr-L-Ala, L-Tyr-L-Met and L-Tyr-L-Trp (in vitro). This chain is Hydrophobic dipeptide epimerase, found in Flavobacteria bacterium (strain MS024-2A).